We begin with the raw amino-acid sequence, 383 residues long: Succinyl-diaminopimelate desuccinylase (383 aa).

His-73 lines the Zn(2+) pocket. Asp-75 is a catalytic residue. Residue Asp-107 participates in Zn(2+) binding. Residue Glu-141 is the Proton acceptor of the active site. Glu-142, Glu-170, and His-356 together coordinate Zn(2+).

This sequence belongs to the peptidase M20A family. DapE subfamily. As to quaternary structure, homodimer. It depends on Zn(2+) as a cofactor. Requires Co(2+) as cofactor.

It catalyses the reaction N-succinyl-(2S,6S)-2,6-diaminopimelate + H2O = (2S,6S)-2,6-diaminopimelate + succinate. It participates in amino-acid biosynthesis; L-lysine biosynthesis via DAP pathway; LL-2,6-diaminopimelate from (S)-tetrahydrodipicolinate (succinylase route): step 3/3. In terms of biological role, catalyzes the hydrolysis of N-succinyl-L,L-diaminopimelic acid (SDAP), forming succinate and LL-2,6-diaminopimelate (DAP), an intermediate involved in the bacterial biosynthesis of lysine and meso-diaminopimelic acid, an essential component of bacterial cell walls. The sequence is that of Succinyl-diaminopimelate desuccinylase from Pseudomonas putida (strain GB-1).